Here is a 289-residue protein sequence, read N- to C-terminus: Protein FraH (289 aa).

The DZANK-type zinc finger occupies 4 to 49 (CPNCNHPNPDGAVQCEACYTPLPATSNCPNCGATVQSDAAFCGQCG). A zinc finger lies at 18 to 48 (CEACYTPLPATSNCPNCGATVQSDAAFCGQC). The region spanning 204–260 (VHIGKPNDRIPPDVDVSGFANSEIVSRVHADIRLEGDAHYIEDVGSSNGTYINNLPL) is the FHA domain.

Functionally, putative heterocyst to vegetative cell connection. This Nostoc sp. (strain PCC 7120 / SAG 25.82 / UTEX 2576) protein is Protein FraH (fraH).